A 341-amino-acid polypeptide reads, in one-letter code: Ribonucleoside-diphosphate reductase small chain A (341 aa).

Residues 1–20 form a disordered region; that stretch reads MGSLKEGQGRDMEEGESEEP. 3 residues coordinate Fe cation: Asp-87, Glu-118, and His-121. Tyr-125 is an active-site residue. Residues Glu-180, Glu-214, and His-217 each coordinate Fe cation.

The protein belongs to the ribonucleoside diphosphate reductase small chain family. As to quaternary structure, homodimer and heterodimer with TSO2. Heterotetramer of two R1 and two R2 chains. A radical transfer pathway may occur between Tyr-125 of protein R2 and R1. Homodimer contains a dinuclear non-heme iron center and a stable tyrosyl radical essential for activity. A transfer pathway may occur between Tyr-125 of protein R2 and R1. Interacts with CSN7. Fe cation serves as cofactor. Expressed in rosette leaves, cauline leaves, stems and flowers.

The protein resides in the cytoplasm. It catalyses the reaction a 2'-deoxyribonucleoside 5'-diphosphate + [thioredoxin]-disulfide + H2O = a ribonucleoside 5'-diphosphate + [thioredoxin]-dithiol. With respect to regulation, inhibited by phenol, paracetamol, 2,4,6-trimethylphenol, resveratrol, furfuryl mercaptan, 2-thiophenthiol, phenylhydrazine, and hydroxyurea. Provides the precursors necessary for DNA synthesis. Catalyzes the biosynthesis of deoxyribonucleotides from the corresponding ribonucleotides. In Arabidopsis thaliana (Mouse-ear cress), this protein is Ribonucleoside-diphosphate reductase small chain A (RNR2A).